Consider the following 295-residue polypeptide: Protoheme IX farnesyltransferase (295 aa).

The next 9 helical transmembrane spans lie at 7-27 (VTKPGIIFGNLISVIGGFLLA), 34-54 (VPLFILTMAGVSLVVASGCVF), 78-98 (LIAPGVSLWYASALGVAGIAL), 106-126 (LAALLAVLGFIVYVGVYSLYM), 131-151 (VYGTLVGSLSGAAPPVIGYCA), 161-181 (LILLAIFSLWQMPHSYAIAIF), 207-227 (ITLYILAFMVPTLMLFLGGYA), 228-248 (GYKYLIVATAVSVWWLGMALS), and 263-283 (LFMFSIVTITCLSVMMSVDFQ).

It belongs to the UbiA prenyltransferase family. Protoheme IX farnesyltransferase subfamily.

The protein localises to the cell inner membrane. It carries out the reaction heme b + (2E,6E)-farnesyl diphosphate + H2O = Fe(II)-heme o + diphosphate. It participates in porphyrin-containing compound metabolism; heme O biosynthesis; heme O from protoheme: step 1/1. Its function is as follows. Converts heme B (protoheme IX) to heme O by substitution of the vinyl group on carbon 2 of heme B porphyrin ring with a hydroxyethyl farnesyl side group. The polypeptide is Protoheme IX farnesyltransferase (Aeromonas salmonicida (strain A449)).